The sequence spans 241 residues: Venom nerve growth factor 2 (241 aa).

The N-terminal stretch at 1 to 18 is a signal peptide; that stretch reads MSMLCYTLITAFLIGIWA. Positions 19–125 are excised as a propeptide; the sequence is APKSEDNVPL…SLNRNIRAKR (107 aa). A disordered region spans residues 47–67; sequence GLKTSRNTDQRHPAPQKAEDQ. Intrachain disulfides connect C139–C203, C181–C231, and C191–C233.

This sequence belongs to the NGF-beta family. As to quaternary structure, homodimer; non-covalently linked. As to expression, expressed by the venom gland.

It is found in the secreted. In terms of biological role, nerve growth factor is important for the development and maintenance of the sympathetic and sensory nervous systems. It stimulates division and differentiation of sympathetic and embryonic sensory neurons as well as basal forebrain cholinergic neurons in the brain. Its relevance in the snake venom is not clear. However, it has been shown to inhibit metalloproteinase-dependent proteolysis of platelet glycoprotein Ib alpha, suggesting a metalloproteinase inhibition to prevent metalloprotease autodigestion and/or protection against prey proteases. Binds a lipid between the two protein chains in the homodimer. The lipid-bound form promotes histamine relase from mouse mast cells, contrary to the lipid-free form. The protein is Venom nerve growth factor 2 of Naja sputatrix (Malayan spitting cobra).